Consider the following 168-residue polypeptide: 2-C-methyl-D-erythritol 2,4-cyclodiphosphate synthase (168 aa).

Residues Asp11 and His13 each coordinate a divalent metal cation. 4-CDP-2-C-methyl-D-erythritol 2-phosphate-binding positions include 11-13 and 41-42; these read DVH and HS. His49 provides a ligand contact to a divalent metal cation. Residues 63-65, 68-72, 139-142, Phe146, and Arg149 each bind 4-CDP-2-C-methyl-D-erythritol 2-phosphate; these read DIG, FPDTD, and TTTE.

Belongs to the IspF family. Homotrimer. It depends on a divalent metal cation as a cofactor.

The enzyme catalyses 4-CDP-2-C-methyl-D-erythritol 2-phosphate = 2-C-methyl-D-erythritol 2,4-cyclic diphosphate + CMP. It participates in isoprenoid biosynthesis; isopentenyl diphosphate biosynthesis via DXP pathway; isopentenyl diphosphate from 1-deoxy-D-xylulose 5-phosphate: step 4/6. Functionally, involved in the biosynthesis of isopentenyl diphosphate (IPP) and dimethylallyl diphosphate (DMAPP), two major building blocks of isoprenoid compounds. Catalyzes the conversion of 4-diphosphocytidyl-2-C-methyl-D-erythritol 2-phosphate (CDP-ME2P) to 2-C-methyl-D-erythritol 2,4-cyclodiphosphate (ME-CPP) with a corresponding release of cytidine 5-monophosphate (CMP). This Psychrobacter arcticus (strain DSM 17307 / VKM B-2377 / 273-4) protein is 2-C-methyl-D-erythritol 2,4-cyclodiphosphate synthase.